An 80-amino-acid chain; its full sequence is DNA-binding protein HU-like (80 aa).

This sequence belongs to the bacterial histone-like protein family.

Histone-like DNA-binding protein which is capable of wrapping DNA to stabilize it, and thus to prevent its denaturation under extreme environmental conditions. This is DNA-binding protein HU-like from Rickettsia rickettsii (strain Sheila Smith).